Here is a 280-residue protein sequence, read N- to C-terminus: Fructose-1,6-bisphosphatase class 1 (280 aa).

The Mg(2+) site is built by Glu64, Asp83, Leu85, and Asp86. Substrate-binding positions include 86–89, Tyr189, and Lys220; that span reads DGSS. Position 226 (Glu226) interacts with Mg(2+).

This sequence belongs to the FBPase class 1 family. In terms of assembly, homotetramer. It depends on Mg(2+) as a cofactor.

The protein localises to the cytoplasm. The catalysed reaction is beta-D-fructose 1,6-bisphosphate + H2O = beta-D-fructose 6-phosphate + phosphate. It functions in the pathway carbohydrate biosynthesis; gluconeogenesis. This Campylobacter jejuni subsp. jejuni serotype O:6 (strain 81116 / NCTC 11828) protein is Fructose-1,6-bisphosphatase class 1.